The sequence spans 724 residues: Probable serine/threonine-protein kinase KKQ8 (724 aa).

2 disordered regions span residues 1–81 (MVMQ…RQRS) and 93–188 (HPFR…KDIL). A Phosphoserine modification is found at Ser-19. Residues 45–54 (PYRSSSTSPK) show a composition bias toward low complexity. Residues 95–106 (FRQTGSGASNSP) show a composition bias toward polar residues. Residues 143–162 (RSSSVSSCDSSNGTTSSSDS) are compositionally biased toward low complexity. Phosphoserine occurs at positions 232, 238, and 241. 2 stretches are compositionally biased toward polar residues: residues 318-329 (NASSLLPNVEKS) and 338-351 (GQSP…SPTQ). The interval 318-355 (NASSLLPNVEKSQTNHEKRTGQSPNDSNRSSPTQGRED) is disordered. One can recognise a Protein kinase domain in the interval 412–712 (GHPVGLVGAG…VGKLLDMQWM (301 aa)). Residues 418 to 426 (VGAGAYGEV) and Lys-455 contribute to the ATP site. The Proton acceptor role is filled by Asp-563.

This sequence belongs to the protein kinase superfamily. CAMK Ser/Thr protein kinase family. NPR/HAL subfamily. HAL5 sub-subfamily.

It localises to the cytoplasm. The enzyme catalyses L-seryl-[protein] + ATP = O-phospho-L-seryl-[protein] + ADP + H(+). It catalyses the reaction L-threonyl-[protein] + ATP = O-phospho-L-threonyl-[protein] + ADP + H(+). The sequence is that of Probable serine/threonine-protein kinase KKQ8 (KKQ8) from Saccharomyces cerevisiae (strain YJM789) (Baker's yeast).